The chain runs to 186 residues: Ribosome-recycling factor (186 aa).

Residues 140–163 (LKKAEKDGDIGQDEGRSLSERVQK) form a disordered region.

Belongs to the RRF family.

The protein localises to the cytoplasm. Functionally, responsible for the release of ribosomes from messenger RNA at the termination of protein biosynthesis. May increase the efficiency of translation by recycling ribosomes from one round of translation to another. The polypeptide is Ribosome-recycling factor (Rhizobium rhizogenes (strain K84 / ATCC BAA-868) (Agrobacterium radiobacter)).